The following is a 196-amino-acid chain: WYSGMFAPNIKQEPISHHHHHHHAHHSYHQHPHDSNSNSNASSPHQSPLPSPNPPSNTNLQLEQYLKQQQQQQQQQQQQQQPMDTLCAAAMTPSSSNNDQNSPLMPPGLPNPMQSIMPANLRPSPTATTTTTPAAAAPTTTAATIALQANDKLQALTPPMDVTPPKSPAKSQQSCAEREKEHDLMSNSSEDMKYMA.

2 disordered regions span residues 16–60 (SHHH…NTNL) and 90–196 (AMTP…KYMA). Residues 17–30 (HHHHHHHAHHSYHQ) show a composition bias toward basic residues. Residues 92–103 (TPSSSNNDQNSP) are compositionally biased toward polar residues. Over residues 125 to 144 (PTATTTTTPAAAAPTTTAAT) the composition is skewed to low complexity. The segment covering 176-196 (AEREKEHDLMSNSSEDMKYMA) has biased composition (basic and acidic residues).

The protein belongs to the hunchback C2H2-type zinc-finger protein family.

Its subcellular location is the nucleus. Functionally, gap class segmentation protein that controls development of head structures. The protein is Protein hunchback (hb) of Drosophila silvestris (Fruit fly).